Consider the following 59-residue polypeptide: Small, acid-soluble spore protein H (59 aa).

The protein belongs to the SspH family.

The protein localises to the spore core. This Alkaliphilus metalliredigens (strain QYMF) protein is Small, acid-soluble spore protein H.